The chain runs to 628 residues: Basal cell adhesion molecule (628 aa).

The signal sequence occupies residues 1-31; that stretch reads MEPPDAPAQARGAPRLLLLAVLLAAHPDAQA. Ig-like V-type domains lie at 32–142 and 147–257; these read EVRL…ARLN and PEAT…PTFH. Residues 32-547 are Extracellular-facing; that stretch reads EVRLSVPPLV…GTVSPQTSQA (516 aa). Disulfide bonds link Cys53-Cys125, Cys172-Cys237, and Cys291-Cys337. 3 consecutive Ig-like C2-type domains span residues 274-355, 363-441, and 448-541; these read PSTP…KTLE, PLEL…QNFT, and PELK…GTVS. The interval 309 to 312 is interaction with laminin alpha5; that stretch reads EQEE. Residues Asn321, Asn377, Asn383, Asn419, and Asn439 are each glycosylated (N-linked (GlcNAc...) asparagine). Cysteines 384 and 424 form a disulfide. Cysteines 473 and 522 form a disulfide. Residues 548–568 traverse the membrane as a helical segment; the sequence is GVAVMAVAVSVGLLLLVVAVF. The Cytoplasmic portion of the chain corresponds to 569-628; the sequence is YCVRRKGGPCCRQRREKGAPPPGEPGLSHSGSEQPEQTGLLMGGASGGARGGSGGFGDEC. The tract at residues 579 to 628 is disordered; that stretch reads CRQRREKGAPPPGEPGLSHSGSEQPEQTGLLMGGASGGARGGSGGFGDEC. Residue Ser596 is modified to Phosphoserine; by GSK3. Ser598 carries the phosphoserine; by CK2 modification. At Ser600 the chain carries Phosphoserine. Gly residues predominate over residues 609-628; sequence LMGGASGGARGGSGGFGDEC. At Ser621 the chain carries Phosphoserine; by PKA or PKB/AKT1.

In terms of assembly, homodimer. Interacts with ITGA4:ITGB1. Interacts with spectrins SPTA1 and SPTB1. In terms of processing, epinephrine-stimulated phosphorylation of Ser-621 by PKA enhances adhesion to laminin. Ser-621 can also be phosphorylated by AKT1. As to expression, wide tissue distribution (highest in the pancreas and very low in brain). Closely associated with the basal layer of cells in epithelia and the endothelium of blood vessel walls.

The protein localises to the cell membrane. Transmembrane glycoprotein that functions as both a receptor and an adhesion molecule playing a crucial role in cell adhesion, motility, migration and invasion. Extracellular domain enables binding to extracellular matrix proteins, such as laminin, integrin and other ligands while its intracellular domain interacts with cytoskeletal proteins like hemoglobin, facilitating cell signal transduction. Serves as a receptor for laminin alpha-5/LAMA5 to promote cell adhesion. Mechanistically, JAK2 induces BCAM phosphorylation and activates its adhesion to laminin by stimulating a Rap1/AKT signaling pathway in the absence of EPOR. The polypeptide is Basal cell adhesion molecule (BCAM) (Homo sapiens (Human)).